Reading from the N-terminus, the 369-residue chain is Cell division protein FtsZ (369 aa).

GTP contacts are provided by residues 27–31, 119–121, glutamate 150, and asparagine 189; these read GAGNN and GTG.

It belongs to the FtsZ family. As to quaternary structure, homodimer. Polymerizes to form a dynamic ring structure in a strictly GTP-dependent manner. Interacts directly with several other division proteins.

It localises to the cytoplasm. In terms of biological role, essential cell division protein that forms a contractile ring structure (Z ring) at the future cell division site. The regulation of the ring assembly controls the timing and the location of cell division. One of the functions of the FtsZ ring is to recruit other cell division proteins to the septum to produce a new cell wall between the dividing cells. Binds GTP and shows GTPase activity. The chain is Cell division protein FtsZ from Mycoplasma genitalium (strain ATCC 33530 / DSM 19775 / NCTC 10195 / G37) (Mycoplasmoides genitalium).